The following is a 139-amino-acid chain: Fluoroacetyl-CoA thioesterase (139 aa).

Residues 40–50 (FATGFMVGLME) and Gly69 each bind substrate. Active-site residues include Thr42 and Glu50. Residues Gly69 and 76–77 (HT) contribute to the CoA site. Residue His76 is part of the active site. A substrate-binding site is contributed by Arg120.

In terms of assembly, homodimer.

The catalysed reaction is fluoroacetyl-CoA + H2O = fluoroacetate + CoA + H(+). Functionally, hydrolyzes fluoroacetyl-CoA before it can react with citrate synthase, and thus confers fluoroacetate resistance. Cannot use acetyl-CoA as substrate. The chain is Fluoroacetyl-CoA thioesterase (flK) from Streptantibioticus cattleyicolor (Streptomyces cattleya).